The sequence spans 351 residues: UDP-N-acetylglucosamine--N-acetylmuramyl-(pentapeptide) pyrophosphoryl-undecaprenol N-acetylglucosamine transferase (351 aa).

Residues 12 to 14 (TGG), asparagine 124, arginine 160, serine 188, isoleucine 239, 258 to 263 (ALTVCE), and glutamine 283 each bind UDP-N-acetyl-alpha-D-glucosamine.

This sequence belongs to the glycosyltransferase 28 family. MurG subfamily.

Its subcellular location is the cell inner membrane. The enzyme catalyses di-trans,octa-cis-undecaprenyl diphospho-N-acetyl-alpha-D-muramoyl-L-alanyl-D-glutamyl-meso-2,6-diaminopimeloyl-D-alanyl-D-alanine + UDP-N-acetyl-alpha-D-glucosamine = di-trans,octa-cis-undecaprenyl diphospho-[N-acetyl-alpha-D-glucosaminyl-(1-&gt;4)]-N-acetyl-alpha-D-muramoyl-L-alanyl-D-glutamyl-meso-2,6-diaminopimeloyl-D-alanyl-D-alanine + UDP + H(+). The protein operates within cell wall biogenesis; peptidoglycan biosynthesis. Its function is as follows. Cell wall formation. Catalyzes the transfer of a GlcNAc subunit on undecaprenyl-pyrophosphoryl-MurNAc-pentapeptide (lipid intermediate I) to form undecaprenyl-pyrophosphoryl-MurNAc-(pentapeptide)GlcNAc (lipid intermediate II). The polypeptide is UDP-N-acetylglucosamine--N-acetylmuramyl-(pentapeptide) pyrophosphoryl-undecaprenol N-acetylglucosamine transferase (Glaesserella parasuis serovar 5 (strain SH0165) (Haemophilus parasuis)).